The chain runs to 257 residues: MEFVDEKRYRKIKNGVGRAVADFNLIEEGDRIAVAVSGGKDSYTLLHILEALRRRAPVKYDLVAFTIDSGYPGFRSDVIAAHLKEHGFSHHVEATTHYDIIKEKRRPGSSYCSICARLKRGVLYTLAQQHGCNKLALGHHLDDFVETLLLNQFFVGTLKAMAPRMLADNGATTVIRPLVYVEEREIIPFARENSFPVVCCCCPVCGKADIQRKRMKELLKELERENPAVKRSLLRALANVQPRHLLDRELQRVCEVP.

The short motif at 37–42 (SGGKDS) is the PP-loop motif element. [4Fe-4S] cluster is bound by residues Cys112, Cys115, and Cys202.

This sequence belongs to the TtcA family. As to quaternary structure, homodimer. Requires Mg(2+) as cofactor. It depends on [4Fe-4S] cluster as a cofactor.

Its subcellular location is the cytoplasm. The enzyme catalyses cytidine(32) in tRNA + S-sulfanyl-L-cysteinyl-[cysteine desulfurase] + AH2 + ATP = 2-thiocytidine(32) in tRNA + L-cysteinyl-[cysteine desulfurase] + A + AMP + diphosphate + H(+). The protein operates within tRNA modification. Its function is as follows. Catalyzes the ATP-dependent 2-thiolation of cytidine in position 32 of tRNA, to form 2-thiocytidine (s(2)C32). The sulfur atoms are provided by the cysteine/cysteine desulfurase (IscS) system. The protein is tRNA-cytidine(32) 2-sulfurtransferase of Geobacter metallireducens (strain ATCC 53774 / DSM 7210 / GS-15).